The primary structure comprises 185 residues: Ribosome-recycling factor (185 aa).

Belongs to the RRF family.

It is found in the cytoplasm. Responsible for the release of ribosomes from messenger RNA at the termination of protein biosynthesis. May increase the efficiency of translation by recycling ribosomes from one round of translation to another. The protein is Ribosome-recycling factor of Laribacter hongkongensis (strain HLHK9).